Here is a 2335-residue protein sequence, read N- to C-terminus: Pre-mRNA-processing-splicing factor 8 (2335 aa).

Ala2 carries the post-translational modification N-acetylalanine. Residues 812-1303 form a reverse transcriptase homology domain region; the sequence is TTVHWLESRR…KIQTRIKIGL (492 aa). Phosphoserine is present on residues Ser859 and Ser1358. The segment at 1304 to 1577 is linker; the sequence is NSKMPSRFPP…TLKISLIQIF (274 aa). At Lys1425 the chain carries N6,N6-dimethyllysine. Lys1463 is subject to N6-acetyllysine. Positions 1513–1526 are important for branch point selection; sequence MKWKKLTNAQRSGL. Positions 1581–1752 are restriction endonuclease homology domain; sequence LWQKIHESIV…LRERIRKGLQ (172 aa). The interval 1669 to 2034 is involved in interaction with pre-mRNA 5' splice site; it reads GDYDSHDIER…QIAEIEKQTK (366 aa). The interval 1767-2020 is RNase H homology domain; that stretch reads NYGELFSNQI…ILGMEISAPS (254 aa). The 132-residue stretch at 2103 to 2234 folds into the MPN domain; sequence TYILPKNVLK…LTAYKLTPSG (132 aa). The required for interaction with EFTUD2 and SNRNP200 stretch occupies residues 2301 to 2335; sequence PKEFYHEVHRPSHFLNFALLQEGEVYSADREDLYA.

In terms of assembly, part of the U5 snRNP complex. Component of the U4/U6-U5 tri-snRNP complex composed of the U4, U6 and U5 snRNAs and at least PRPF3, PRPF4, PRPF6, PRPF8, PRPF31, SNRNP200, TXNL4A, SNRNP40, DDX23, CD2BP2, PPIH, SNU13, EFTUD2, SART1 and USP39. Component of the U5.U4atac/U6atac snRNP complexes in U12-dependent spliceosomes. Within the minor spliceosome, which acts on U12-type introns, interacts with PPIL2 and RBM48. Core component of U2-type precatalytic, catalytic and postcatalytic spliceosomal complexes. Found in a mRNA splicing-dependent exon junction complex (EJC) with SRRM1. Interacts with U5 snRNP proteins SNRP116 and SNRNP40. Interacts with EFTUD2. Interacts (via the MPN (JAB/Mov34) domain) with PRPF3 ('Lys-63'-linked polyubiquitinated); may stabilize the U4/U6-U5 tri-snRNP complex. Interacts (via RNase H homology domain) with AAR2. Interacts with RPAP3 and URI1 in a ZNHIT2-dependent manner. Interacts with C9orf78. Interacts with SNRNP200; the interaction is direct. Interacts with TSSC4; the interaction is direct. In terms of tissue distribution, widely expressed.

It localises to the nucleus. The protein resides in the nucleus speckle. Plays a role in pre-mRNA splicing as core component of precatalytic, catalytic and postcatalytic spliceosomal complexes, both of the predominant U2-type spliceosome and the minor U12-type spliceosome. Functions as a scaffold that mediates the ordered assembly of spliceosomal proteins and snRNAs. Required for the assembly of the U4/U6-U5 tri-snRNP complex, a building block of the spliceosome. Functions as a scaffold that positions spliceosomal U2, U5 and U6 snRNAs at splice sites on pre-mRNA substrates, so that splicing can occur. Interacts with both the 5' and the 3' splice site. The polypeptide is Pre-mRNA-processing-splicing factor 8 (PRPF8) (Homo sapiens (Human)).